The primary structure comprises 631 residues: Putative meiotic phospholipase SPO1 (631 aa).

Positions 1–17 (MQKLLFVFSVLLTVVLA) are cleaved as a signal peptide. The required for lipid-binding and function in meiosis stretch occupies residues 24 to 67 (QCPSSPLIREAKHELCPEETLYLKKKKIKTKNKLIQFLKSLTEA). The PLA2c domain maps to 24-631 (QCPSSPLIRE…LQCFKDYCYS (608 aa)). N-linked (GlcNAc...) asparagine glycans are attached at residues asparagine 233, asparagine 293, and asparagine 303. A helical transmembrane segment spans residues 376–396 (FITATSSSIFNNVLIFIWNLA). 5 N-linked (GlcNAc...) asparagine glycosylation sites follow: asparagine 500, asparagine 536, asparagine 560, asparagine 563, and asparagine 572.

It belongs to the lysophospholipase family. Interacts with SPO23. Glycosylated.

The protein resides in the endoplasmic reticulum membrane. Its subcellular location is the nucleus membrane. Regulates spindle pole duplication in meiosis I, but not in mitosis. Required for meiosis I, meiosis II chromosome segregation and spore formation. Binds phosphatidylinositol (4)P mono- and polyphosphates. This Saccharomyces cerevisiae (strain ATCC 204508 / S288c) (Baker's yeast) protein is Putative meiotic phospholipase SPO1 (SPO1).